The following is a 96-amino-acid chain: Small ribosomal subunit protein bS6 (96 aa).

This sequence belongs to the bacterial ribosomal protein bS6 family.

Its function is as follows. Binds together with bS18 to 16S ribosomal RNA. This is Small ribosomal subunit protein bS6 from Carboxydothermus hydrogenoformans (strain ATCC BAA-161 / DSM 6008 / Z-2901).